Reading from the N-terminus, the 326-residue chain is Tetraacyldisaccharide 4'-kinase (326 aa).

53 to 60 (SVGGNGKT) is an ATP binding site.

Belongs to the LpxK family.

The catalysed reaction is a lipid A disaccharide + ATP = a lipid IVA + ADP + H(+). Its pathway is glycolipid biosynthesis; lipid IV(A) biosynthesis; lipid IV(A) from (3R)-3-hydroxytetradecanoyl-[acyl-carrier-protein] and UDP-N-acetyl-alpha-D-glucosamine: step 6/6. Functionally, transfers the gamma-phosphate of ATP to the 4'-position of a tetraacyldisaccharide 1-phosphate intermediate (termed DS-1-P) to form tetraacyldisaccharide 1,4'-bis-phosphate (lipid IVA). This chain is Tetraacyldisaccharide 4'-kinase, found in Actinobacillus pleuropneumoniae serotype 7 (strain AP76).